We begin with the raw amino-acid sequence, 55 residues long: uncharacterized protein (55 aa).

Polar residues predominate over residues 1–15 (MVGQEQLESSPLCQH). Residues 1–26 (MVGQEQLESSPLCQHSDNETETKREC) are disordered. Residues 16–26 (SDNETETKREC) show a composition bias toward basic and acidic residues.

This is an uncharacterized protein from Escherichia coli (strain K12).